Reading from the N-terminus, the 1607-residue chain is Thrombospondin type-1 domain-containing protein 7B (1607 aa).

The first 31 residues, 1–31 (MFLRSDLAVTHWVSRSMRKLFLVLSLLLSQA), serve as a signal peptide directing secretion. The Extracellular segment spans residues 32–1556 (AHLEGRKDNQ…QPLDPDGRVK (1525 aa)). TSP type-1 domains follow at residues 40-98 (NQFL…RVCD), 102-177 (DLFQ…IPCP), 179-233 (DCVV…VSCP), 336-392 (DCET…IAEG), 399-482 (PRYS…VPCS), 484-543 (DCIV…PMCH), 601-661 (DCVV…HSCT), 662-735 (QLYW…LPCK), 737-796 (DCLV…SLCP), 797-869 (SYRW…IPCR), 871-924 (DCTF…CPCD), 925-999 (TFMS…IPCP), 1001-1126 (DCKL…LLCP), 1128-1182 (ECVM…ENCF), 1183-1246 (QFQY…VECV), 1248-1303 (NCQL…TPCY), 1304-1369 (SWVL…VPCP), and 1371-1432 (DCHI…GKCY). Residues Asn-150 and Asn-219 are each glycosylated (N-linked (GlcNAc...) asparagine). Intrachain disulfides connect Cys-411/Cys-477, Cys-431/Cys-481, and Cys-442/Cys-466. 3 disulfides stabilise this stretch: Cys-602–Cys-643, Cys-613–Cys-617, and Cys-655–Cys-660. An N-linked (GlcNAc...) asparagine glycan is attached at Asn-683. 3 disulfide bridges follow: Cys-738–Cys-779, Cys-749–Cys-753, and Cys-789–Cys-795. A glycan (N-linked (GlcNAc...) asparagine) is linked at Asn-757. Asn-842 carries an N-linked (GlcNAc...) asparagine glycan. Asn-933 carries N-linked (GlcNAc...) asparagine glycosylation. 5 disulfides stabilise this stretch: Cys-937–Cys-994, Cys-960–Cys-998, Cys-971–Cys-984, Cys-1002–Cys-1039, and Cys-1013–Cys-1017. Asn-985 is a glycosylation site (N-linked (GlcNAc...) asparagine). Asn-1105 carries an N-linked (GlcNAc...) asparagine glycan. The cysteines at positions 1121 and 1125 are disulfide-linked. N-linked (GlcNAc...) asparagine glycans are attached at residues Asn-1187 and Asn-1199. 3 disulfides stabilise this stretch: Cys-1249–Cys-1287, Cys-1260–Cys-1264, and Cys-1297–Cys-1302. 2 N-linked (GlcNAc...) asparagine glycosylation sites follow: Asn-1309 and Asn-1335. Intrachain disulfides connect Cys-1372/Cys-1416, Cys-1383/Cys-1387, and Cys-1426/Cys-1431. Residues Asn-1457 and Asn-1525 are each glycosylated (N-linked (GlcNAc...) asparagine). Residues 1557–1577 (MWVYGVSGGSFLIMIFLVFTS) traverse the membrane as a helical segment. Over 1578-1607 (YLVCKKPKPHQSTPRHQKPLTLAYDGDLDM) the chain is Cytoplasmic.

It is found in the membrane. In Mus musculus (Mouse), this protein is Thrombospondin type-1 domain-containing protein 7B.